Reading from the N-terminus, the 307-residue chain is Trehalose transport system permease protein SugA (307 aa).

Transmembrane regions (helical) follow at residues 25-45 (LAFMLVAPAAMLMVAVTAYPI), 89-109 (LAITAVSVTIEFVLGLALALV), 123-143 (AVLIPYGIVTVVASYSWYYAW), 168-188 (LGIVVIAEVWKTTPFMSLLLL), 217-237 (ILPMIKPAIVVALLFRTLDAF), and 272-292 (LGSAISVLIFGCVAVIAFIFI). In terms of domain architecture, ABC transmembrane type-1 spans 85 to 291 (LAVTLAITAV…GCVAVIAFIF (207 aa)).

It belongs to the binding-protein-dependent transport system permease family. In terms of assembly, the complex is composed of two ATP-binding proteins (SugC), two transmembrane proteins (Suga and SugB) and a solute-binding protein (LpqY).

The protein localises to the cell inner membrane. Part of the ABC transporter complex LpqY-SugA-SugB-SugC, which is highly specific for uptake of trehalose. Involved in the recycling of extracellular trehalose released from trehalose-containing molecules synthesized by M.tuberculosis. Trehalose uptake is essential for virulence. Probably responsible for the translocation of the substrate across the membrane. This is Trehalose transport system permease protein SugA (sugA) from Mycobacterium tuberculosis (strain CDC 1551 / Oshkosh).